Consider the following 109-residue polypeptide: Class I hydrophobin G (109 aa).

Residues 1 to 19 (MRLSILSVFSLVGAGMVSA) form the signal peptide. Intrachain disulfides connect cysteine 36–cysteine 90, cysteine 42–cysteine 84, cysteine 43–cysteine 76, and cysteine 91–cysteine 105.

Belongs to the fungal hydrophobin family.

The protein resides in the secreted. It localises to the cell wall. Aerial growth, conidiation, and dispersal of filamentous fungi in the environment rely upon a capability of their secreting small amphipathic proteins called hydrophobins (HPBs) with low sequence identity. Class I can self-assemble into an outermost layer of rodlet bundles on aerial cell surfaces, conferring cellular hydrophobicity that supports fungal growth, development and dispersal; whereas Class II form highly ordered films at water-air interfaces through intermolecular interactions but contribute nothing to the rodlet structure. In P.expansum, hydrophobins contribute to germination, tolerance to cold stress and mycotoxins patulin and citrinin production. The polypeptide is Class I hydrophobin G (Penicillium expansum (Blue mold rot fungus)).